The chain runs to 106 residues: Thioredoxin-like protein YdbP (106 aa).

Positions 1–106 (MKKITTNEQF…VTEFLSEHIS (106 aa)) constitute a Thioredoxin domain. A disulfide bridge connects residues Cys29 and Cys32.

This sequence belongs to the thioredoxin family.

Its function is as follows. Participates in various redox reactions through the reversible oxidation of its active center dithiol to a disulfide and catalyzes dithiol-disulfide exchange reactions. This Bacillus subtilis (strain 168) protein is Thioredoxin-like protein YdbP (ydbP).